The chain runs to 627 residues: Protein EXECUTER 2, chloroplastic (627 aa).

3 disordered regions span residues methionine 1–alanine 34, proline 212–serine 277, and glutamate 308–proline 359. A chloroplast-targeting transit peptide spans methionine 1–arginine 45. The span at serine 217 to serine 229 shows a compositional bias: low complexity. Acidic residues-rich tracts occupy residues glutamate 308 to glutamine 321 and serine 331 to alanine 353.

It localises to the plastid. The protein localises to the chloroplast. Together with EX1, enables higher plants to perceive singlet oxygen as a stress signal in plastid that activates a genetically determined nuclear stress response program which triggers a programmed cell death (PCD). This transfer of singlet oxygen-induced stress-related signals from the plastid to the nucleus that triggers genetically controlled PCD pathway is unique to photosynthetic eukaryotes and operates under mild stress conditions, impeding photosystem II (PSII) without causing photooxidative damage of the plant. In Oryza sativa subsp. japonica (Rice), this protein is Protein EXECUTER 2, chloroplastic.